We begin with the raw amino-acid sequence, 106 residues long: MATPGPVIPEVPFEPSKPPVIEGLSPTVYRNPESFKEKFVRKTRENPVVPIGCLATAAALTYGLYSFHRGNSQRSQLMMRTRIAAQGFTVAAILLGLAVTAMKSRP.

A2 is subject to N-acetylalanine. The region spanning 20 to 106 (VIEGLSPTVY…LAVTAMKSRP (87 aa)) is the HIG1 domain. Helical transmembrane passes span 47-67 (PVVP…LYSF) and 83-103 (IAAQ…TAMK). The Mitochondrial matrix portion of the chain corresponds to 104 to 106 (SRP).

As to quaternary structure, associates with cytochrome c oxidase (COX, complex IV); proposed complex component.

The protein resides in the mitochondrion membrane. The protein localises to the mitochondrion inner membrane. In terms of biological role, proposed subunit of cytochrome c oxidase (COX, complex IV), which is the terminal component of the mitochondrial respiratory chain that catalyzes the reduction of oxygen to water. May be involved in cytochrome c oxidase activity. May play a role in the assembly of respiratory supercomplexes. The polypeptide is HIG1 domain family member 2A, mitochondrial (HIGD2A) (Homo sapiens (Human)).